The following is a 137-amino-acid chain: 6,7-dimethyl-8-ribityllumazine synthase (137 aa).

5-amino-6-(D-ribitylamino)uracil contacts are provided by residues Phe11, 43 to 45 (SFD), and 67 to 69 (CVI). Residue 72–73 (DT) coordinates (2S)-2-hydroxy-3-oxobutyl phosphate. The active-site Proton donor is His75. Leu100 provides a ligand contact to 5-amino-6-(D-ribitylamino)uracil. Arg115 contacts (2S)-2-hydroxy-3-oxobutyl phosphate.

This sequence belongs to the DMRL synthase family. Forms an icosahedral capsid composed of 60 subunits, arranged as a dodecamer of pentamers.

It catalyses the reaction (2S)-2-hydroxy-3-oxobutyl phosphate + 5-amino-6-(D-ribitylamino)uracil = 6,7-dimethyl-8-(1-D-ribityl)lumazine + phosphate + 2 H2O + H(+). The protein operates within cofactor biosynthesis; riboflavin biosynthesis; riboflavin from 2-hydroxy-3-oxobutyl phosphate and 5-amino-6-(D-ribitylamino)uracil: step 1/2. In terms of biological role, catalyzes the formation of 6,7-dimethyl-8-ribityllumazine by condensation of 5-amino-6-(D-ribitylamino)uracil with 3,4-dihydroxy-2-butanone 4-phosphate. This is the penultimate step in the biosynthesis of riboflavin. This is 6,7-dimethyl-8-ribityllumazine synthase from Methanococcus maripaludis (strain C5 / ATCC BAA-1333).